A 228-amino-acid chain; its full sequence is MKSTRPFHPTPVITIDGPTASGKGTVAALVAAHLGFHLLDSGALYRLAALASIRYQVEPDDADALASLVDGLHITFREGCAQLDGVDVSDEIRAEAVGNRASAIAVHASVRAALVARQRAFRKTPGLVADGRDMGTVIFPDAVLKVFLTASVEARAARRHKQLMQKGFSANMDNLLQDLRERDARDSNRAAAPLKPAADAKPLDTSALTIEQSVEQVLAWYRELGQPA.

Residue 17–25 (GPTASGKGT) participates in ATP binding.

It belongs to the cytidylate kinase family. Type 1 subfamily.

It is found in the cytoplasm. The catalysed reaction is CMP + ATP = CDP + ADP. It catalyses the reaction dCMP + ATP = dCDP + ADP. The protein is Cytidylate kinase of Burkholderia pseudomallei (strain 1106a).